A 410-amino-acid polypeptide reads, in one-letter code: G-protein coupled receptor family C group 5 member B (410 aa).

An N-terminal signal peptide occupies residues 1 to 28 (MFLVLERKMRTHQVFPLPLLLVIASVAS). The Extracellular portion of the chain corresponds to 29-56 (ENASTSRGCGLDLLPQYVSLCDLDAIWG). A glycan (N-linked (GlcNAc...) asparagine) is linked at asparagine 30. A helical transmembrane segment spans residues 57–77 (IVVEAVAGAGALITLLLMLIL). Topologically, residues 78-94 (LVRLPFIKDKERKRPVC) are cytoplasmic. Residues 95–115 (LHFLFLLGTLGLFGLTFAFII) traverse the membrane as a helical segment. Residues 116-126 (QMDETICSIRR) are Extracellular-facing. Residues 127-147 (FLWGVLFALCFSCLLSQAWRV) traverse the membrane as a helical segment. At 148-164 (RRLVRQGTSPASWQLVS) the chain is on the cytoplasmic side. A helical transmembrane segment spans residues 165–185 (LALCLMLVQVIIATEWLVLTV). The Extracellular segment spans residues 186-199 (LRDTKPACAYEPMD). A helical transmembrane segment spans residues 200–220 (FVMALIYDMVLLAITLAQSLF). Residues 221 to 234 (TLCGKFKRWKVNGA) are Cytoplasmic-facing. Residues 235-255 (FILVTTFLSALIWVVWMTMYL) form a helical membrane-spanning segment. Residues 256–271 (FGNSLIKQGDAWSDPT) are Extracellular-facing. Residues 272 to 292 (LAITLAASGWVFVIFHAIPEI) form a helical membrane-spanning segment. The Cytoplasmic segment spans residues 293-410 (HYTLLPPLQE…PPSHTGRHHW (118 aa)). Phosphoserine is present on serine 355. The disordered stretch occupies residues 356-381 (LEQRSSSLGKKPSSLGNRPSAPFRSN). Positions 360 to 371 (SSSLGKKPSSLG) are enriched in low complexity.

This sequence belongs to the G-protein coupled receptor 3 family.

Its subcellular location is the cell membrane. It localises to the cytoplasmic vesicle membrane. Its function is as follows. G-protein coupled receptor involved in the regulation of cell volume. The polypeptide is G-protein coupled receptor family C group 5 member B (Gprc5b) (Mus musculus (Mouse)).